The chain runs to 287 residues: ATP synthase gamma chain (287 aa).

This sequence belongs to the ATPase gamma chain family. In terms of assembly, F-type ATPases have 2 components, CF(1) - the catalytic core - and CF(0) - the membrane proton channel. CF(1) has five subunits: alpha(3), beta(3), gamma(1), delta(1), epsilon(1). CF(0) has three main subunits: a, b and c.

The protein resides in the cell inner membrane. Produces ATP from ADP in the presence of a proton gradient across the membrane. The gamma chain is believed to be important in regulating ATPase activity and the flow of protons through the CF(0) complex. In Photorhabdus laumondii subsp. laumondii (strain DSM 15139 / CIP 105565 / TT01) (Photorhabdus luminescens subsp. laumondii), this protein is ATP synthase gamma chain.